Reading from the N-terminus, the 450-residue chain is FAD-dependent monooxygenase okaB (450 aa).

Residues 14 to 34 (IVIIIVGLGIAGLSAAIECHG) traverse the membrane as a helical segment. Glutamate 43 and arginine 116 together coordinate FAD. Arginine 194 is a catalytic residue. Positions 318 and 331 each coordinate FAD.

This sequence belongs to the paxM FAD-dependent monooxygenase family.

Its subcellular location is the membrane. The catalysed reaction is cyclo(N(8)-(alpha,alpha-dimethylallyl)-L-Trp-6a-(alpha,alpha-dimethylallyl)-L-Trp) + AH2 + O2 = okaramine C + A + H2O. The protein operates within alkaloid biosynthesis. FAD-dependent monooxygenase; part of the gene cluster that mediates the biosynthesis of okaramine B, a prenylated indole alkaloid that possesses an unusual octacyclic ring system, including a four-membered azetidine ring and an eight-membered azocine ring, and that exhibits insecticidal activity against silkworm larvae. Within the pathway, okaC performs indole 2,3-epoxidation, facilitating the formation of the hexahydropyrrolo[2,3-b]indole (HPI) moiety of okaramine C. okaC then performs asymmetric reverse prenylation of cyclo(L-Trp-L-Trp) at N-1 and C-2' of the indole ring to produce the cyclic prenylated tryptophan dimer cyclo(N8-(alpha,alpha-dimethylallyl)-L-Trp-6a-(alpha,alpha-dime-thylallyl)-L-Trp). The biosynthesis begins with the NRPS okaA that condenses two tryptophan molecules into cyclo(L-Trp-L-Trp). Prenylation by the prenyltransferase okaC then leads to the formation of cyclo(N8-(alpha,alpha-dimethylallyl)-L-Trp-6a-(alpha,alpha-dime-thylallyl)-L-Trp). This is followed by indole 2,3-epoxidation by the FAD-dependent monooxygenase okaB to facilitate the formation of the hexahydropyrrolo[2,3-b]indole (HPI) moiety of okaramine C. The cytochrome P450 monooxygenase okaD then likely catalyzes formation of the eight-membered ring of okaramine A. The dioxygenase okaE further forms the unusual 2-dimethyl-3-methyl-azetidine ring to yield 12-deshydroxyl okaramine E, as well as the hydroxylation of 12-deshydroxyl okaramine E to produce okaramine E. The cytochrome P450 monoxygenase okaG converts 12-deshydroxyl okaramine E into 3-desmethyl okaramine B which is further methylated by the methyltransferase okaF into okaramine B. In a shunt pathway, okaG and okaF together are also able to convert okaramine E into okaramine D. Okaramine H is produced by nonenzymatic conversion from okaramine A. The protein is FAD-dependent monooxygenase okaB of Penicillium ochrochloron.